The primary structure comprises 1226 residues: Methionine synthase (1226 aa).

Residues 6–326 enclose the Hcy-binding domain; that stretch reads RQQIEAQLKQ…EHIRQMAQAV (321 aa). Residues Cys-248, Cys-311, and Cys-312 each contribute to the Zn(2+) site. The region spanning 357–618 is the Pterin-binding domain; that stretch reads FINVGERTNV…VPEKLREAVE (262 aa). A B12-binding N-terminal domain is found at 651-745; that stretch reads SALEWRTWPV…FINAEKQSGS (95 aa). Methylcob(III)alamin is bound by residues Glu-695, 757–761, His-760, Ser-805, Thr-809, and Ala-861; that span reads GDVHD. The B12-binding domain occupies 747-882; that stretch reads NGKILLATVK…SDERRPAFIE (136 aa). In terms of domain architecture, AdoMet activation spans 898–1226; it reads KKPRTKPVTL…EKWLGPNING (329 aa). S-adenosyl-L-methionine is bound by residues Asp-948, Arg-1136, and 1191–1192; that span reads YF.

The protein belongs to the vitamin-B12 dependent methionine synthase family. The cofactor is methylcob(III)alamin. Zn(2+) serves as cofactor.

The catalysed reaction is (6S)-5-methyl-5,6,7,8-tetrahydrofolate + L-homocysteine = (6S)-5,6,7,8-tetrahydrofolate + L-methionine. Its pathway is amino-acid biosynthesis; L-methionine biosynthesis via de novo pathway; L-methionine from L-homocysteine (MetH route): step 1/1. Functionally, catalyzes the transfer of a methyl group from methyl-cobalamin to homocysteine, yielding enzyme-bound cob(I)alamin and methionine. Subsequently, remethylates the cofactor using methyltetrahydrofolate. This is Methionine synthase (metH) from Vibrio parahaemolyticus serotype O3:K6 (strain RIMD 2210633).